The sequence spans 415 residues: Serine hydroxymethyltransferase (415 aa).

(6S)-5,6,7,8-tetrahydrofolate-binding positions include leucine 121 and glycine 125 to leucine 127. At lysine 230 the chain carries N6-(pyridoxal phosphate)lysine.

The protein belongs to the SHMT family. In terms of assembly, homodimer. It depends on pyridoxal 5'-phosphate as a cofactor.

Its subcellular location is the cytoplasm. It carries out the reaction (6R)-5,10-methylene-5,6,7,8-tetrahydrofolate + glycine + H2O = (6S)-5,6,7,8-tetrahydrofolate + L-serine. It participates in one-carbon metabolism; tetrahydrofolate interconversion. It functions in the pathway amino-acid biosynthesis; glycine biosynthesis; glycine from L-serine: step 1/1. Catalyzes the reversible interconversion of serine and glycine with tetrahydrofolate (THF) serving as the one-carbon carrier. This reaction serves as the major source of one-carbon groups required for the biosynthesis of purines, thymidylate, methionine, and other important biomolecules. Also exhibits THF-independent aldolase activity toward beta-hydroxyamino acids, producing glycine and aldehydes, via a retro-aldol mechanism. This Syntrophomonas wolfei subsp. wolfei (strain DSM 2245B / Goettingen) protein is Serine hydroxymethyltransferase.